A 218-amino-acid chain; its full sequence is Adenylate kinase (218 aa).

10 to 15 (GAGKGT) contributes to the ATP binding site. Residues 30 to 59 (STGDMLRAAVKAGTPLGLEAKAIMDAGGLV) are NMP. Residues Thr31, Arg36, 57–59 (GLV), 85–88 (GFPR), and Gln92 contribute to the AMP site. The LID stretch occupies residues 122 to 159 (GRRVHLASGRTYHVTFNPPKAAGKDDVTGEDLVQRDDD). ATP-binding positions include Arg123 and 132–133 (TY). Positions 156 and 167 each coordinate AMP. ATP is bound at residue Arg203.

This sequence belongs to the adenylate kinase family. As to quaternary structure, monomer.

It localises to the cytoplasm. The enzyme catalyses AMP + ATP = 2 ADP. It functions in the pathway purine metabolism; AMP biosynthesis via salvage pathway; AMP from ADP: step 1/1. Functionally, catalyzes the reversible transfer of the terminal phosphate group between ATP and AMP. Plays an important role in cellular energy homeostasis and in adenine nucleotide metabolism. This chain is Adenylate kinase, found in Chromobacterium violaceum (strain ATCC 12472 / DSM 30191 / JCM 1249 / CCUG 213 / NBRC 12614 / NCIMB 9131 / NCTC 9757 / MK).